The sequence spans 406 residues: Succinylornithine transaminase/acetylornithine aminotransferase (406 aa).

Pyridoxal 5'-phosphate is bound by residues 108 to 109 (GA) and Phe141. Residue Arg144 coordinates N(2)-acetyl-L-ornithine. 226 to 229 (DEVQ) provides a ligand contact to pyridoxal 5'-phosphate. N6-(pyridoxal phosphate)lysine is present on Lys255. Thr283 contacts N(2)-acetyl-L-ornithine. Pyridoxal 5'-phosphate is bound at residue Thr284.

It belongs to the class-III pyridoxal-phosphate-dependent aminotransferase family. ArgD subfamily. In terms of assembly, homodimer. It depends on pyridoxal 5'-phosphate as a cofactor.

The protein resides in the cytoplasm. It carries out the reaction N(2)-succinyl-L-ornithine + 2-oxoglutarate = N-succinyl-L-glutamate 5-semialdehyde + L-glutamate. It catalyses the reaction N(2)-acetyl-L-ornithine + 2-oxoglutarate = N-acetyl-L-glutamate 5-semialdehyde + L-glutamate. It participates in amino-acid biosynthesis; L-arginine biosynthesis; N(2)-acetyl-L-ornithine from L-glutamate: step 4/4. Its pathway is amino-acid degradation; L-arginine degradation via AST pathway; L-glutamate and succinate from L-arginine: step 3/5. In terms of biological role, transaminates both N(2)-acetylornithine and N(2)-succinylornithine. This is Succinylornithine transaminase/acetylornithine aminotransferase (aruC) from Pseudomonas aeruginosa (strain ATCC 15692 / DSM 22644 / CIP 104116 / JCM 14847 / LMG 12228 / 1C / PRS 101 / PAO1).